The following is a 306-amino-acid chain: Low density lipoprotein receptor adapter protein 1 (306 aa).

M1 is modified (N-acetylmethionine). S14 bears the Phosphoserine mark. Positions 44–168 (GMVFSLKYLG…VAQAFKVAFE (125 aa)) constitute a PID domain. The segment at 178 to 204 (EKREKANQEGGDVPGTRRDSTPSLKTS) is disordered. 2 positions are modified to phosphoserine: S197 and S200. The Clathrin box signature appears at 210–214 (LLDLE). The interval 247-274 (WELDDGLDEAFSRLAQSRTNPQVLDTGL) is AP-2 complex binding. A [DE]-X(1,2)-F-X-X-[FL]-X-X-X-R motif motif is present at residues 255-264 (EAFSRLAQSR).

In terms of assembly, interacts (via PID domain) with LDLR (via NPXY motifs). Binds to soluble clathrin trimers. Interacts with AP2B1; the interaction mediates the association with the AP-2 complex. Interacts with VLDLR. Interacts with LRP2.

It localises to the cytoplasm. In terms of biological role, adapter protein (clathrin-associated sorting protein (CLASP)) required for efficient endocytosis of the LDL receptor (LDLR) in polarized cells such as hepatocytes and lymphocytes, but not in non-polarized cells (fibroblasts). May be required for LDL binding and internalization but not for receptor clustering in coated pits. May facilitate the endocytosis of LDLR and LDLR-LDL complexes from coated pits by stabilizing the interaction between the receptor and the structural components of the pits. May also be involved in the internalization of other LDLR family members. Binds to phosphoinositides, which regulate clathrin bud assembly at the cell surface. Required for trafficking of LRP2 to the endocytic recycling compartment which is necessary for LRP2 proteolysis, releasing a tail fragment which translocates to the nucleus and mediates transcriptional repression. In Rattus norvegicus (Rat), this protein is Low density lipoprotein receptor adapter protein 1.